The following is a 377-amino-acid chain: MQQRVIVGMSGGVDSSVSAALLLQQGYQVEGLFMKNWEEDDGTEYCTALEDLADAQAVADKIGIKLHTANFAMEYWDRVFEHFLAEYAAGRTPNPDILCNKEIKFRAFIDHAMTLGADFIATGHYTRRGESMQNSRGESYAPLLRGVDNNKDQSYFLHAVHGREINKTLFPVGEIEKPEVRKIAEKLDLATAKKKDSTGICFIGERRFNDFLKQYLPAQPGKIVLDNGKEVGEHHGLMYYTLGQRGGIGLGGLKGAAEGAWFVLHKDLENNRLVIGQGHEHPLMQSTTLWSQDIDWVAGEQDIPASGFRCTAKTRYRQPDQACTIYRDEDRNNGVRVEFDEPQRAVTPGQSVVFYTNEICLGGGVILHTDAPTPDFI.

Residues 8–15 (GMSGGVDS) and Met34 each bind ATP. The tract at residues 94–96 (NPD) is interaction with target base in tRNA. Cys99 acts as the Nucleophile in catalysis. Cysteines 99 and 201 form a disulfide. Gly123 lines the ATP pocket. The tract at residues 151-153 (KDQ) is interaction with tRNA. The Cysteine persulfide intermediate role is filled by Cys201. An interaction with tRNA region spans residues 315-316 (RY).

It belongs to the MnmA/TRMU family.

It localises to the cytoplasm. It carries out the reaction S-sulfanyl-L-cysteinyl-[protein] + uridine(34) in tRNA + AH2 + ATP = 2-thiouridine(34) in tRNA + L-cysteinyl-[protein] + A + AMP + diphosphate + H(+). Catalyzes the 2-thiolation of uridine at the wobble position (U34) of tRNA, leading to the formation of s(2)U34. In Acinetobacter baylyi (strain ATCC 33305 / BD413 / ADP1), this protein is tRNA-specific 2-thiouridylase MnmA.